The chain runs to 481 residues: Glutamyl-tRNA(Gln) amidotransferase subunit A (481 aa).

Residues Lys76 and Ser151 each act as charge relay system in the active site. Ser175 functions as the Acyl-ester intermediate in the catalytic mechanism.

The protein belongs to the amidase family. GatA subfamily. As to quaternary structure, heterotrimer of A, B and C subunits.

The catalysed reaction is L-glutamyl-tRNA(Gln) + L-glutamine + ATP + H2O = L-glutaminyl-tRNA(Gln) + L-glutamate + ADP + phosphate + H(+). In terms of biological role, allows the formation of correctly charged Gln-tRNA(Gln) through the transamidation of misacylated Glu-tRNA(Gln) in organisms which lack glutaminyl-tRNA synthetase. The reaction takes place in the presence of glutamine and ATP through an activated gamma-phospho-Glu-tRNA(Gln). This Neisseria gonorrhoeae (strain ATCC 700825 / FA 1090) protein is Glutamyl-tRNA(Gln) amidotransferase subunit A.